Here is a 63-residue protein sequence, read N- to C-terminus: H/ACA ribonucleoprotein complex subunit 3-like protein (63 aa).

The interval 18–40 (KMDPEGKPTLSAHPARFSPDDKY) is disordered.

This sequence belongs to the NOP10 family. As to quaternary structure, component of the small nucleolar ribonucleoprotein particles containing H/ACA-type snoRNAs (H/ACA snoRNPs).

The protein localises to the nucleus. It localises to the nucleolus. In terms of biological role, required for ribosome biogenesis. Part of a complex which catalyzes pseudouridylation of rRNA. This involves the isomerization of uridine such that the ribose is subsequently attached to C5, instead of the normal N1. Pseudouridine ('psi') residues may serve to stabilize the conformation of rRNAs. This Trypanosoma cruzi protein is H/ACA ribonucleoprotein complex subunit 3-like protein.